We begin with the raw amino-acid sequence, 649 residues long: Acetyl-coenzyme A synthetase (649 aa).

Residues 189–192 (RGGK), threonine 311, and asparagine 335 each bind CoA. Residues 387–389 (GEP), 411–416 (DTWWQT), aspartate 500, and arginine 515 contribute to the ATP site. Position 523 (serine 523) interacts with CoA. Arginine 526 is an ATP binding site. Mg(2+)-binding residues include valine 537, histidine 539, and valine 542. Arginine 584 is a CoA binding site. N6-acetyllysine is present on lysine 609.

Belongs to the ATP-dependent AMP-binding enzyme family. The cofactor is Mg(2+). Post-translationally, acetylated. Deacetylation by the SIR2-homolog deacetylase activates the enzyme.

The catalysed reaction is acetate + ATP + CoA = acetyl-CoA + AMP + diphosphate. Catalyzes the conversion of acetate into acetyl-CoA (AcCoA), an essential intermediate at the junction of anabolic and catabolic pathways. AcsA undergoes a two-step reaction. In the first half reaction, AcsA combines acetate with ATP to form acetyl-adenylate (AcAMP) intermediate. In the second half reaction, it can then transfer the acetyl group from AcAMP to the sulfhydryl group of CoA, forming the product AcCoA. The sequence is that of Acetyl-coenzyme A synthetase from Sinorhizobium fredii (strain NBRC 101917 / NGR234).